Reading from the N-terminus, the 731-residue chain is MFVAAMTESDQNIINLLFSGHYADPFAVLGMHDTASGLEVRALLPDAIDVWVVDAHSGRKVANLQCRDPRGFFASAIPRRKKPFSYRLAVTWPQDTQVIDDPYRFGTLLQELDIWLLAEGRHLRPFETLGAHPSTLDGVVGTCFAVWAPNAQRVSVVGDFNFWDGRRHPMRRRRENGVWELFVPGVGPGQLYKFEIIDCYGNVLVKSDPYAFESQMRPDTASVVSRLPPALPVDEARQHANELQSPISIYEVHLGSWRRHTHNNFWLSYRELADQLVPYVKEMGFTHVELMPVHKHPFDGSWGYQPLGLYAPTRRFGSPDDFRYLVSAFHEAGINVLLDWVSGHFPADSYGLARFDGPALYEYADPKEGYHQDWNTLIYNFDRHEVRNYLAGNALYWTERFGVDGLRVDAVASMIYRDYSRRDGEWVPNYFGGKENLEAIGFLRYTNQMLGQHHAGAVTIAEESTDYAGVTLPPEHGGLGFHYKWNMGWMHDSLAYMQLDPVHRKYHHDLLTFGMLYAYSENFVLPLSHDEVVHGKRSLLDRMPGDVWQKFANLRAYYGFMWAYPGKKLLFMGGEFAQGREWNHDTSLDWHLLDEPEGWHAGVQQLVRDLNHCYRQHPPLYQCDYLHQGFEWVVVDDRENSVFAFIRRDADGNEMLIISNFTPVPRDSYRVGINQPGAWREVLNTDSWHYHGGNLGNQGLVYSETVGSHSRPQSLVLALPPLATLYLVKEA.

The active-site Nucleophile is Asp409. Glu462 functions as the Proton donor in the catalytic mechanism.

Belongs to the glycosyl hydrolase 13 family. GlgB subfamily. Monomer.

It catalyses the reaction Transfers a segment of a (1-&gt;4)-alpha-D-glucan chain to a primary hydroxy group in a similar glucan chain.. Its pathway is glycan biosynthesis; glycogen biosynthesis. In terms of biological role, catalyzes the formation of the alpha-1,6-glucosidic linkages in glycogen by scission of a 1,4-alpha-linked oligosaccharide from growing alpha-1,4-glucan chains and the subsequent attachment of the oligosaccharide to the alpha-1,6 position. The chain is 1,4-alpha-glucan branching enzyme GlgB (glgB) from Dickeya chrysanthemi (Pectobacterium chrysanthemi).